The chain runs to 246 residues: MQALLFLMALLLPSRAGAEEIIGGVESEPHSRPYMAYVNTFSKKGYVAICGGFLIAPQFVMTAAHCSGRRMTVTLGAHNVRKRECTQQKIKVEKYILPPNYNVSSKFNDIVLLKLKKQANLTSAVDVVPLPGPSDFAKPGTMCWAAGWGRTGVKKSISHTLREVELKIVGEKACKIFRHYKDSLQICVGSSTKVASVYMGDSGGPLLCAGVAHGIVSSGRGNAKPPAIFTRISPHVPWINRVIKGE.

Positions 1–18 (MQALLFLMALLLPSRAGA) are cleaved as a signal peptide. Positions 19–20 (EE) are cleaved as a propeptide — activation peptide. Residues 21-244 (IIGGVESEPH…HVPWINRVIK (224 aa)) enclose the Peptidase S1 domain. A disulfide bridge links C50 with C66. Residues H65 and D109 each act as charge relay system in the active site. Intrachain disulfides connect C143/C208 and C174/C187. The Charge relay system role is filled by S202.

This sequence belongs to the peptidase S1 family. Granzyme subfamily. Selectively expressed in uterine mast cells.

This is Mast cell protease 9 (Mcpt9) from Mus musculus (Mouse).